A 218-amino-acid chain; its full sequence is Pyridoxine/pyridoxamine 5'-phosphate oxidase (218 aa).

Substrate contacts are provided by residues 14–17 (RREY) and lysine 72. FMN is bound by residues 67-72 (RIVLLK), 82-83 (YT), arginine 88, lysine 89, and glutamine 111. Substrate contacts are provided by tyrosine 129, arginine 133, and serine 137. Residues 146–147 (QS) and tryptophan 191 each bind FMN. A substrate-binding site is contributed by 197–199 (RLH). Arginine 201 serves as a coordination point for FMN.

The protein belongs to the pyridoxamine 5'-phosphate oxidase family. As to quaternary structure, homodimer. FMN is required as a cofactor.

The catalysed reaction is pyridoxamine 5'-phosphate + O2 + H2O = pyridoxal 5'-phosphate + H2O2 + NH4(+). It carries out the reaction pyridoxine 5'-phosphate + O2 = pyridoxal 5'-phosphate + H2O2. It functions in the pathway cofactor metabolism; pyridoxal 5'-phosphate salvage; pyridoxal 5'-phosphate from pyridoxamine 5'-phosphate: step 1/1. Its pathway is cofactor metabolism; pyridoxal 5'-phosphate salvage; pyridoxal 5'-phosphate from pyridoxine 5'-phosphate: step 1/1. Functionally, catalyzes the oxidation of either pyridoxine 5'-phosphate (PNP) or pyridoxamine 5'-phosphate (PMP) into pyridoxal 5'-phosphate (PLP). This Escherichia coli O157:H7 protein is Pyridoxine/pyridoxamine 5'-phosphate oxidase.